The sequence spans 181 residues: UPF0200 protein Ta0179 (181 aa).

An ATP-binding site is contributed by 6 to 13 (GMPGAGKD).

Belongs to the UPF0200 family.

This Thermoplasma acidophilum (strain ATCC 25905 / DSM 1728 / JCM 9062 / NBRC 15155 / AMRC-C165) protein is UPF0200 protein Ta0179.